The primary structure comprises 141 residues: uncharacterized protein (141 aa).

4 helical membrane passes run 7-24 (YRIP…FLSP), 39-56 (FLKF…HRGI), 69-91 (FYLI…ILGF), and 116-138 (FFIL…SSFI).

It is found in the cell membrane. This is an uncharacterized protein from Aquifex aeolicus (strain VF5).